The following is a 396-amino-acid chain: MSTLKLNPYFGEYGGMYVPQILVPALKQLETAFVEAQEDDDFKAEFTDLLKNYAGRPTALTLTRNLSPNPMVKIYLKREDLLHGGAHKTNQVLGQALLAKRMGKKEIIAETGAGQHGVATALACALLGLKCKVYMGAKDVARQSPNVFRMRLMGAEVIPVTSGSATLKDACNEAMRDWSGSYEKAHYLLGTAAGPHPFPTIVREFQRIIGEETKKQMLEREGRLPDAVIACVGGGSNAIGMFADFIDEPSVELIGVEPAGKGIDTPMHGAPLKHGKTGIFFGMKAPLMQDSEGQIEESYSISAGLDFPSVGPQHAHLNATGRARYESATDDEALEAFQQLARCEGIIPALESAHAIAYAVKMARECTKETILVVNLSGRGDKDIFTVSDILNGKEV.

Lys-88 bears the N6-(pyridoxal phosphate)lysine mark.

Belongs to the TrpB family. Tetramer of two alpha and two beta chains. The cofactor is pyridoxal 5'-phosphate.

It carries out the reaction (1S,2R)-1-C-(indol-3-yl)glycerol 3-phosphate + L-serine = D-glyceraldehyde 3-phosphate + L-tryptophan + H2O. It participates in amino-acid biosynthesis; L-tryptophan biosynthesis; L-tryptophan from chorismate: step 5/5. Functionally, the beta subunit is responsible for the synthesis of L-tryptophan from indole and L-serine. In Shewanella sp. (strain W3-18-1), this protein is Tryptophan synthase beta chain.